A 471-amino-acid chain; its full sequence is Mixed lineage kinase domain-like protein (471 aa).

The interval 1–149 is N-terminal bundle and brace (NBB); mediates INSP6 binding; that stretch reads MENLKHIITL…DADEDRRAFQ (149 aa). A coiled-coil region spans residues 55–84; sequence SEKLTTAMNRFKAALEEANGEIEKFSNRSN. Ser-125 is subject to Phosphoserine. Positions 139 to 180 form a coiled coil; that stretch reads QDADEDRRAFQMLRRDNEKIEASLRRLEINMKEIKETLRQYL. Residues 194–469 enclose the Protein kinase domain; that stretch reads KEIKKEQLSG…DEILKKLSTF (276 aa). ATP is bound by residues 209–217 and Lys-230; that span reads LRENEVSTL. Position 357 is a phosphothreonine; by RIPK3 (Thr-357). 2 positions are modified to phosphoserine; by RIPK3: Ser-358 and Ser-360.

The protein belongs to the protein kinase superfamily. As to quaternary structure, homooligomer. Homotrimer; forms homotrimers on necroptosis induction. Upon TNF-induced necrosis, forms in complex with PGAM5, RIPK1 and RIPK3. Within this complex, may play a role in the proper targeting of RIPK1-RIPK3 to its downstream effector PGAM5. Interacts with RIPK3; the interaction is direct and promotes its phosphorylation and subsequent activation. Phosphorylation by RIPK3 induces a conformational switch that is required for necroptosis. It also induces homotrimerization and localization to the plasma membrane.

It is found in the cytoplasm. Its subcellular location is the cell membrane. It localises to the nucleus. With respect to regulation, activated via binding to highly phosphorylated inositol phosphates such as inositolhexakisphosphate (InsP6) which mediates the release of an N-terminal auto-inhibitory region. Activation requires not only RIPK3-dependent phosphorylation but also binding to highly phosphorylated inositol phosphates. Inhibited by necrosulfonamide, a specific inhibitor of necroptosis that targets Cys-86. Its function is as follows. Pseudokinase that plays a key role in TNF-induced necroptosis, a programmed cell death process. Does not have protein kinase activity. Activated following phosphorylation by RIPK3, leading to homotrimerization, localization to the plasma membrane and execution of programmed necrosis characterized by calcium influx and plasma membrane damage. In addition to TNF-induced necroptosis, necroptosis can also take place in the nucleus in response to orthomyxoviruses infection: following activation by ZBP1, MLKL is phosphorylated by RIPK3 in the nucleus, triggering disruption of the nuclear envelope and leakage of cellular DNA into the cytosol.following ZBP1 activation, which senses double-stranded Z-RNA structures, nuclear RIPK3 catalyzes phosphorylation and activation of MLKL, promoting disruption of the nuclear envelope and leakage of cellular DNA into the cytosol. Binds to highly phosphorylated inositol phosphates such as inositolhexakisphosphate (InsP6) which is essential for its necroptotic function. The protein is Mixed lineage kinase domain-like protein of Homo sapiens (Human).